The primary structure comprises 312 residues: tRNA-dihydrouridine(16) synthase (312 aa).

Residues 7–9 and glutamine 68 each bind FMN; that span reads PME. Cysteine 98 acts as the Proton donor in catalysis. FMN is bound by residues lysine 139, 200 to 202, and 224 to 225; these read NGE and GR.

It belongs to the Dus family. DusC subfamily. FMN is required as a cofactor.

It carries out the reaction 5,6-dihydrouridine(16) in tRNA + NADP(+) = uridine(16) in tRNA + NADPH + H(+). The catalysed reaction is 5,6-dihydrouridine(16) in tRNA + NAD(+) = uridine(16) in tRNA + NADH + H(+). Functionally, catalyzes the synthesis of 5,6-dihydrouridine (D), a modified base found in the D-loop of most tRNAs, via the reduction of the C5-C6 double bond in target uridines. Specifically modifies U16 in tRNAs. The sequence is that of tRNA-dihydrouridine(16) synthase from Yersinia pestis.